A 137-amino-acid chain; its full sequence is Beta-synuclein (137 aa).

Tandem repeats lie at residues 20–30 and 31–41. The tract at residues 20 to 67 is 4 X 11 AA tandem repeats of [EGS]-K-T-K-[EQ]-[GQ]-V-X(4); the sequence is EKTKQGVTEAAEKTKEGVLYVGSKTKEGVVQGVASVAEKTKEQASHLG. Residues 42 to 56 form a 3; approximate repeat; the sequence is SKTKEGVVQGVASVA. Copy 4 of the repeat occupies 57–67; that stretch reads EKTKEQASHLG. Over residues 88 to 97 the composition is skewed to basic and acidic residues; sequence EFPTDLKPEE. The segment at 88 to 137 is disordered; that stretch reads EFPTDLKPEEVAQEAAEEPLIEPLMEPEGESYEDSPQEEYQEYEPEAKGP. Positions 98 to 131 are enriched in acidic residues; the sequence is VAQEAAEEPLIEPLMEPEGESYEDSPQEEYQEYE. Position 118 is a phosphoserine; by BARK1, CK2 and GRK5 (S118).

The protein belongs to the synuclein family. Phosphorylated. Phosphorylation by G-protein coupled receptor kinases (GRK) is more efficient than phosphorylation by CK1, CK2 and CaM-kinase II. As to expression, expressed specifically in brain.

The protein resides in the cytoplasm. May be involved in neuronal plasticity. The sequence is that of Beta-synuclein (Sncb) from Rattus norvegicus (Rat).